The primary structure comprises 261 residues: Cytochrome c oxidase subunit 3 (261 aa).

The Mitochondrial matrix portion of the chain corresponds to 1-15 (MTHQTHAYHMVNPSP). Residues 16-34 (WPLTGALSALLMTSGLIMW) traverse the membrane as a helical segment. The Mitochondrial intermembrane portion of the chain corresponds to 35–40 (FHFNST). Residues 41–66 (ALLMLGLTTNMLTMYQWWRDIIREST) form a helical membrane-spanning segment. The Mitochondrial matrix segment spans residues 67–72 (FQGHHT). Residues 73-105 (PVVQKGLRYGMILFIISEVLFFTGFFWAFYHSS) form a helical membrane-spanning segment. The Mitochondrial intermembrane portion of the chain corresponds to 106–128 (LAPTPELGGCWPPTGINPLNPLE). The helical transmembrane segment at 129 to 152 (VPLLNTSVLLASGVSITWAHHSLM) threads the bilayer. The Mitochondrial matrix segment spans residues 153–155 (EGN). A helical transmembrane segment spans residues 156-183 (RSHMLQALFITITLGVYFTLLQASEYYE). Topologically, residues 184 to 190 (APFTISD) are mitochondrial intermembrane. Residues 191–223 (GVYGSTFFVATGFHGLHVIIGSTFLIVCFFRQL) form a helical membrane-spanning segment. The Mitochondrial matrix portion of the chain corresponds to 224–232 (KFHFTSNHH). The helical transmembrane segment at 233–256 (FGFEAAAWYWHFVDVVWLFLYVSI) threads the bilayer. Residues 257 to 261 (YWWGS) lie on the Mitochondrial intermembrane side of the membrane.

The protein belongs to the cytochrome c oxidase subunit 3 family. As to quaternary structure, component of the cytochrome c oxidase (complex IV, CIV), a multisubunit enzyme composed of 14 subunits. The complex is composed of a catalytic core of 3 subunits MT-CO1, MT-CO2 and MT-CO3, encoded in the mitochondrial DNA, and 11 supernumerary subunits COX4I, COX5A, COX5B, COX6A, COX6B, COX6C, COX7A, COX7B, COX7C, COX8 and NDUFA4, which are encoded in the nuclear genome. The complex exists as a monomer or a dimer and forms supercomplexes (SCs) in the inner mitochondrial membrane with NADH-ubiquinone oxidoreductase (complex I, CI) and ubiquinol-cytochrome c oxidoreductase (cytochrome b-c1 complex, complex III, CIII), resulting in different assemblies (supercomplex SCI(1)III(2)IV(1) and megacomplex MCI(2)III(2)IV(2)).

It is found in the mitochondrion inner membrane. The catalysed reaction is 4 Fe(II)-[cytochrome c] + O2 + 8 H(+)(in) = 4 Fe(III)-[cytochrome c] + 2 H2O + 4 H(+)(out). Functionally, component of the cytochrome c oxidase, the last enzyme in the mitochondrial electron transport chain which drives oxidative phosphorylation. The respiratory chain contains 3 multisubunit complexes succinate dehydrogenase (complex II, CII), ubiquinol-cytochrome c oxidoreductase (cytochrome b-c1 complex, complex III, CIII) and cytochrome c oxidase (complex IV, CIV), that cooperate to transfer electrons derived from NADH and succinate to molecular oxygen, creating an electrochemical gradient over the inner membrane that drives transmembrane transport and the ATP synthase. Cytochrome c oxidase is the component of the respiratory chain that catalyzes the reduction of oxygen to water. Electrons originating from reduced cytochrome c in the intermembrane space (IMS) are transferred via the dinuclear copper A center (CU(A)) of subunit 2 and heme A of subunit 1 to the active site in subunit 1, a binuclear center (BNC) formed by heme A3 and copper B (CU(B)). The BNC reduces molecular oxygen to 2 water molecules using 4 electrons from cytochrome c in the IMS and 4 protons from the mitochondrial matrix. The chain is Cytochrome c oxidase subunit 3 (MT-CO3) from Syncerus caffer (African buffalo).